The primary structure comprises 373 residues: Maltose/maltodextrin import ATP-binding protein MalK (373 aa).

The 231-residue stretch at 4 to 234 (VTLKNVCKAY…PQNRFVAGFI (231 aa)) folds into the ABC transporter domain. Position 36-43 (36-43 (GPSGCGKS)) interacts with ATP.

It belongs to the ABC transporter superfamily. Maltooligosaccharide importer (TC 3.A.1.1.1) family. As to quaternary structure, the complex is composed of two ATP-binding proteins (MalK), two transmembrane proteins (MalG and MalK) and a solute-binding protein (MalE).

The protein resides in the cell inner membrane. The catalysed reaction is D-maltose(out) + ATP + H2O = D-maltose(in) + ADP + phosphate + H(+). Its function is as follows. Part of the ABC transporter complex MalEFGK involved in maltose/maltodextrin import. Responsible for energy coupling to the transport system. This is Maltose/maltodextrin import ATP-binding protein MalK from Vibrio cholerae serotype O1 (strain ATCC 39315 / El Tor Inaba N16961).